The following is a 178-amino-acid chain: Actin-related protein 2/3 complex subunit 3 (178 aa).

K29 is covalently cross-linked (Glycyl lysine isopeptide (Lys-Gly) (interchain with G-Cter in ubiquitin)).

Belongs to the ARPC3 family. As to quaternary structure, component of the Arp2/3 complex composed of ARP2, ARP3, ARC40/p41-ARC, ARC35/p34-ARC, ARC18/p21-ARC, ARC19/p20-ARC and ARC16/p16-ARC.

It is found in the cytoplasm. The protein resides in the cytoskeleton. In terms of biological role, functions as a component of the Arp2/3 complex which is involved in regulation of actin polymerization and together with an activating nucleation-promoting factor (NPF) mediates the formation of branched actin networks. The chain is Actin-related protein 2/3 complex subunit 3 (ARC18) from Saccharomyces cerevisiae (strain ATCC 204508 / S288c) (Baker's yeast).